The primary structure comprises 88 residues: Large ribosomal subunit protein uL23c (88 aa).

The protein belongs to the universal ribosomal protein uL23 family. Part of the 50S ribosomal subunit.

It localises to the plastid. It is found in the chloroplast. Functionally, binds to 23S rRNA. The polypeptide is Large ribosomal subunit protein uL23c (rpl23) (Spirogyra maxima (Green alga)).